Here is a 395-residue protein sequence, read N- to C-terminus: 8-amino-7-oxononanoate synthase (395 aa).

Residue K24 coordinates substrate. Residue 111-112 (GF) participates in pyridoxal 5'-phosphate binding. H136 serves as a coordination point for substrate. Residues S184, 209–212 (DDAH), and 240–243 (TLSK) contribute to the pyridoxal 5'-phosphate site. K243 is modified (N6-(pyridoxal phosphate)lysine). T357 is a binding site for substrate.

This sequence belongs to the class-II pyridoxal-phosphate-dependent aminotransferase family. BioF subfamily. As to quaternary structure, homodimer. The cofactor is pyridoxal 5'-phosphate.

The enzyme catalyses 6-carboxyhexanoyl-[ACP] + L-alanine + H(+) = (8S)-8-amino-7-oxononanoate + holo-[ACP] + CO2. Its pathway is cofactor biosynthesis; biotin biosynthesis. Catalyzes the decarboxylative condensation of pimeloyl-[acyl-carrier protein] and L-alanine to produce 8-amino-7-oxononanoate (AON), [acyl-carrier protein], and carbon dioxide. The protein is 8-amino-7-oxononanoate synthase of Treponema denticola (strain ATCC 35405 / DSM 14222 / CIP 103919 / JCM 8153 / KCTC 15104).